The chain runs to 914 residues: Neutral alpha-glucosidase C (914 aa).

Asp511 (nucleophile) is an active-site residue. Glu514 is an active-site residue. Catalysis depends on Asp587, which acts as the Proton donor.

This sequence belongs to the glycosyl hydrolase 31 family.

It carries out the reaction Hydrolysis of terminal, non-reducing (1-&gt;4)-linked alpha-D-glucose residues with release of alpha-D-glucose.. Functionally, has alpha-glucosidase activity. The sequence is that of Neutral alpha-glucosidase C (GANC) from Homo sapiens (Human).